The following is a 64-amino-acid chain: Defensin-like protein 123 (64 aa).

4 disulfide bridges follow: cysteine 19/cysteine 62, cysteine 29/cysteine 49, cysteine 34/cysteine 56, and cysteine 38/cysteine 58.

Belongs to the DEFL family.

This is Defensin-like protein 123 from Arabidopsis thaliana (Mouse-ear cress).